A 256-amino-acid polypeptide reads, in one-letter code: 5-keto-4-deoxy-D-glucarate aldolase (256 aa).

Catalysis depends on histidine 50, which acts as the Proton acceptor. Glutamine 151 is a substrate binding site. Glutamate 153 serves as a coordination point for Mg(2+). Substrate-binding residues include serine 178 and aspartate 179. Aspartate 179 is a Mg(2+) binding site.

Belongs to the HpcH/HpaI aldolase family. KDGluc aldolase subfamily. In terms of assembly, homohexamer; trimer of dimers. The cofactor is Mg(2+).

The catalysed reaction is 5-dehydro-4-deoxy-D-glucarate = 2-hydroxy-3-oxopropanoate + pyruvate. The enzyme catalyses 2-dehydro-3-deoxy-D-glucarate = 2-hydroxy-3-oxopropanoate + pyruvate. It participates in carbohydrate acid metabolism; galactarate degradation; D-glycerate from galactarate: step 2/3. Its function is as follows. Catalyzes the reversible retro-aldol cleavage of both 5-keto-4-deoxy-D-glucarate and 2-keto-3-deoxy-D-glucarate to pyruvate and tartronic semialdehyde. The chain is 5-keto-4-deoxy-D-glucarate aldolase from Salmonella agona (strain SL483).